The primary structure comprises 352 residues: Glutamine synthetase cytosolic isozyme (352 aa).

One can recognise a GS beta-grasp domain in the interval 19–98; sequence FIAEYIWIDA…VMCDTYTPAG (80 aa). Residues 105–352 enclose the GS catalytic domain; sequence KRCNAAKIFS…TSMIAETTIL (248 aa).

It belongs to the glutamine synthetase family. Homooctamer.

Its subcellular location is the cytoplasm. It catalyses the reaction L-glutamate + NH4(+) + ATP = L-glutamine + ADP + phosphate + H(+). The chain is Glutamine synthetase cytosolic isozyme (GLN1) from Daucus carota (Wild carrot).